Reading from the N-terminus, the 521-residue chain is BAR/IMD domain-containing adapter protein 2 (521 aa).

The IMD domain maps to 1-250; that stretch reads MSLSRSEEMH…VQLMQQMGNS (250 aa). The stretch at 132–153 forms a coiled coil; the sequence is DALDKCQAELKKLRKKSQGSKN. A phosphoserine mark is found at S262, S324, S326, and S337. The segment at 297–370 is disordered; sequence APVMNGVSGP…TLPRSSSMAA (74 aa). The segment covering 321 to 333 has biased composition (low complexity); the sequence is QPKSTSPPQSQSK. At T341 the chain carries Phosphothreonine. S347 carries the post-translational modification Phosphoserine. The span at 353-368 shows a compositional bias: polar residues; sequence SYATTENKTLPRSSSM. T361 is modified (phosphothreonine). Residues S367, S385, S396, and S455 each carry the phosphoserine modification. In terms of domain architecture, SH3 spans 375–438; sequence NGRMRVKAIF…PFSYTRVLDN (64 aa). Positions 450–471 are disordered; sequence QGKSSSTGNLLDKEDLALPPPD.

As to quaternary structure, homodimer. Interacts with CDC42 and RAC1 that have been activated by GTP binding. Interacts with ATN1, ADGRB1, DIAPH1, EPS8, SHANK1, SHANK2, SHANK3, TIAM1, WASF1 and WASF2. Interacts with ENAH after recruitment of CDC42. In terms of processing, phosphorylated on tyrosine residues by INSR in response to insulin treatment.

The protein localises to the cytoplasm. It localises to the membrane. It is found in the cell projection. Its subcellular location is the filopodium. The protein resides in the ruffle. The protein localises to the cytoskeleton. In terms of biological role, adapter protein that links membrane-bound small G-proteins to cytoplasmic effector proteins. Necessary for CDC42-mediated reorganization of the actin cytoskeleton and for RAC1-mediated membrane ruffling. Involved in the regulation of the actin cytoskeleton by WASF family members and the Arp2/3 complex. Plays a role in neurite growth. Acts syngeristically with ENAH to promote filipodia formation. Plays a role in the reorganization of the actin cytoskeleton in response to bacterial infection. Participates in actin bundling when associated with EPS8, promoting filopodial protrusions. The protein is BAR/IMD domain-containing adapter protein 2 (BAIAP2) of Bos taurus (Bovine).